Reading from the N-terminus, the 380-residue chain is Cytochrome b (380 aa).

A run of 4 helical transmembrane segments spans residues 33–53, 77–98, 113–133, and 178–198; these read FGSLLGLCLIIQILTGLFLAM, WLIRYMHANGASMFFICLFLHV, WNMGIVLLFAVMATAFMGYVL, and FFAFHFILPFIITALVLVHLL. Residues histidine 83 and histidine 97 each contribute to the heme b site. The heme b site is built by histidine 182 and histidine 196. Histidine 201 lines the a ubiquinone pocket. 4 helical membrane-spanning segments follow: residues 226 to 246, 288 to 308, 320 to 340, and 347 to 367; these read IKDFLGVLILLMAFMILTLFF, LGGVLALILSIVILAFMPLLH, ITQTMYWILVADLLVLTWIGG, and FIIIGQTASIAYFAIIVILMP.

Belongs to the cytochrome b family. The cytochrome bc1 complex contains 11 subunits: 3 respiratory subunits (MT-CYB, CYC1 and UQCRFS1), 2 core proteins (UQCRC1 and UQCRC2) and 6 low-molecular weight proteins (UQCRH/QCR6, UQCRB/QCR7, UQCRQ/QCR8, UQCR10/QCR9, UQCR11/QCR10 and a cleavage product of UQCRFS1). This cytochrome bc1 complex then forms a dimer. It depends on heme b as a cofactor.

Its subcellular location is the mitochondrion inner membrane. In terms of biological role, component of the ubiquinol-cytochrome c reductase complex (complex III or cytochrome b-c1 complex) that is part of the mitochondrial respiratory chain. The b-c1 complex mediates electron transfer from ubiquinol to cytochrome c. Contributes to the generation of a proton gradient across the mitochondrial membrane that is then used for ATP synthesis. This chain is Cytochrome b (MT-CYB), found in Microtus guentheri (Gunther's vole).